The sequence spans 65 residues: Crotamine (65 aa).

The signal sequence occupies residues 1–22 (MKILYLLFAFLFLAFLSEPGNA). 2 consecutive short sequence motifs (nuclear localization signal) follow at residues 24–40 (KQCH…EKIC) and 49–61 (KMDC…CCKK). 3 disulfide bridges follow: Cys26–Cys58, Cys33–Cys52, and Cys40–Cys59.

The protein belongs to the crotamine-myotoxin family. Monomer. Expressed by the venom gland.

It localises to the secreted. Cationic peptide that possesses multiple functions. It acts as a cell-penetrating peptide (CPP), and as a potent voltage-gated potassium channel inhibitor. It exhibits antimicrobial activities, hind limb paralysis, and severe muscle necrosis by a non-enzymatic mechanism. As a cell-penetrating peptide, crotamine has high specificity for actively proliferating cells, and interacts inside the cell with subcellular and subnuclear structures, like vesicular compartments, chromosomes and centrioles. It penetrates into the cells as fast as five minutes after its addition to cell culture medium. In vivo, after intraperitoneal administration, it is found in cells of peritoneal fluid and bone marrow, demonstrating preferential nuclear and perinuclear localization. To enter the cell, it interacts with the chains of heparan sulfate membrane proteoglycan (HSPG), and is endocytosed (in complex with HSPG) in vesicles which are transported into the cell with the help of clathrin. Inside the cell, crotamine accumulates in lysosomal vesicles. As soon as the peptide accumulates in endosomes/lysosomes vesicles, these compartments are disrupted and their contents released into the cytosol. This loss of lysosomal content induces cell death at high concentrations, or promotes the distribution of crotamine in cytoplasmic compartments, which is a step before crotamine nuclear uptake. As a potassium channel inhibitor, this toxin selectively inhibits Kv1.1/KCNA1, Kv1.2/KCNA2 and Kv1.3/KCNA3 channels with an IC(50) of 369, 386 and 287 nM, respectively. The inhibition of Kv1.3/KCNA channels induced by this toxin occurs rapidly and is voltage-independent. The channel inhibition is reversible after washing, suggesting a pure and classical channel blockage effect, without effects in potassium channel kinetics. As an antimicrobial peptide, crotamine shows antibacterial activity against E.coli and B.subtilis, and antifungal activity against Candida spp., Trichosporon spp. and C.neoformans. It kills bacteria through membrane permeabilization. This Crotalus durissus terrificus (South American rattlesnake) protein is Crotamine (CRO2).